Consider the following 312-residue polypeptide: MKVAVLGAAGGIGQALALLLKTQLPSGSELSLYDIAPVTPGVAVDLSHIPTDVKIKGFSGEDAKPALEGADVVLISAGVARKPGMDRSDLFNVNAGIVKNLIQQVATTCPKACIGIITNPVNTTVAIAAEVLKKAGVYDKNKLFGVTTLDIIRSNTFVAELKGKKPAELDVPVIGGHSGVTILPLLSQIPGVNFTDQEVADLTKRIQNAGTEVVEAKAGGGSATLSMGQAAARFGLSLVRALQGEQGVVECAYVEGDGEYARFFSQPLLLGKNGIEERKPIGTLSAYEQQALEGMLDTLKKDIALGEEFVNK.

NAD(+)-binding positions include G7 to G13 and D34. Substrate-binding residues include R81 and R87. Residues N94 and I117–N119 each bind NAD(+). Substrate is bound by residues N119 and R153. H177 (proton acceptor) is an active-site residue. M227 contributes to the NAD(+) binding site.

The protein belongs to the LDH/MDH superfamily. MDH type 1 family. As to quaternary structure, homodimer.

The enzyme catalyses (S)-malate + NAD(+) = oxaloacetate + NADH + H(+). In terms of biological role, catalyzes the reversible oxidation of malate to oxaloacetate. In Cronobacter sakazakii (strain ATCC BAA-894) (Enterobacter sakazakii), this protein is Malate dehydrogenase.